Consider the following 67-residue polypeptide: Large ribosomal subunit protein uL29 (67 aa).

It belongs to the universal ribosomal protein uL29 family.

In Staphylothermus marinus (strain ATCC 43588 / DSM 3639 / JCM 9404 / F1), this protein is Large ribosomal subunit protein uL29.